Reading from the N-terminus, the 391-residue chain is Succinate--CoA ligase [ADP-forming] subunit beta (391 aa).

The region spanning 9-247 is the ATP-grasp domain; that stretch reads KDILAKYGVA…IAEEDPLEVE (239 aa). Residues Lys-49, 56–58, Glu-102, Ala-105, and Glu-110 each bind ATP; that span reads GRG. Asn-202 and Asp-216 together coordinate Mg(2+). Substrate is bound by residues Asn-267 and 324–326; that span reads GIL.

This sequence belongs to the succinate/malate CoA ligase beta subunit family. Heterotetramer of two alpha and two beta subunits. Mg(2+) serves as cofactor.

It carries out the reaction succinate + ATP + CoA = succinyl-CoA + ADP + phosphate. The catalysed reaction is GTP + succinate + CoA = succinyl-CoA + GDP + phosphate. It participates in carbohydrate metabolism; tricarboxylic acid cycle; succinate from succinyl-CoA (ligase route): step 1/1. Its function is as follows. Succinyl-CoA synthetase functions in the citric acid cycle (TCA), coupling the hydrolysis of succinyl-CoA to the synthesis of either ATP or GTP and thus represents the only step of substrate-level phosphorylation in the TCA. The beta subunit provides nucleotide specificity of the enzyme and binds the substrate succinate, while the binding sites for coenzyme A and phosphate are found in the alpha subunit. This is Succinate--CoA ligase [ADP-forming] subunit beta from Acidobacterium capsulatum (strain ATCC 51196 / DSM 11244 / BCRC 80197 / JCM 7670 / NBRC 15755 / NCIMB 13165 / 161).